Consider the following 205-residue polypeptide: tRNA 2-(methylsulfanyl)-N(6)-isopentenyladenosine(37) hydroxylase (205 aa).

Residues Glu38, Glu69, His72, Glu122, Glu151, and His154 each contribute to the Fe cation site.

Belongs to the MiaE family. Homodimer. The cofactor is Fe cation.

The enzyme catalyses 2-methylsulfanyl-N(6)-dimethylallyladenosine(37) in tRNA + AH2 + O2 = N(6)-[(2E)-4-hydroxy-3-methylbut-2-en-1-yl]-2-(methylsulfanyl)adenosine(37) in tRNA + A + H2O. Its pathway is tRNA modification; 2-methylthio-N-6-(cis-hydroxy)isopentenyl adenosine-tRNA biosynthesis. Involved in specific tRNA modification. Catalyzes the oxygen-dependent hydroxylation of 2-methylthio-N-6-isopentenyl adenosine (ms2i6A) to produce 2-methylthio-N-6-(cis-hydroxy)isopentenyl adenosine (ms2io6A) at position 37 in tRNAs. The chain is tRNA 2-(methylsulfanyl)-N(6)-isopentenyladenosine(37) hydroxylase from Pseudomonas putida (strain ATCC 47054 / DSM 6125 / CFBP 8728 / NCIMB 11950 / KT2440).